A 228-amino-acid chain; its full sequence is Ribose-5-phosphate isomerase A (228 aa).

Residues 29 to 32 (TGST), 85 to 88 (DGAD), and 98 to 101 (KGGG) contribute to the substrate site. E107 functions as the Proton acceptor in the catalytic mechanism. K125 contributes to the substrate binding site.

This sequence belongs to the ribose 5-phosphate isomerase family. In terms of assembly, homodimer.

It carries out the reaction aldehydo-D-ribose 5-phosphate = D-ribulose 5-phosphate. The protein operates within carbohydrate degradation; pentose phosphate pathway; D-ribose 5-phosphate from D-ribulose 5-phosphate (non-oxidative stage): step 1/1. Functionally, catalyzes the reversible conversion of ribose-5-phosphate to ribulose 5-phosphate. This Staphylococcus aureus (strain Mu50 / ATCC 700699) protein is Ribose-5-phosphate isomerase A.